Here is a 317-residue protein sequence, read N- to C-terminus: tRNA N6-adenosine threonylcarbamoyltransferase (317 aa).

Positions 110 and 114 each coordinate Fe cation. Residues 132-136 (VVSGG), aspartate 165, glycine 178, aspartate 182, and asparagine 271 contribute to the substrate site. Aspartate 300 lines the Fe cation pocket.

This sequence belongs to the KAE1 / TsaD family. Requires Fe(2+) as cofactor.

The protein resides in the cytoplasm. The catalysed reaction is L-threonylcarbamoyladenylate + adenosine(37) in tRNA = N(6)-L-threonylcarbamoyladenosine(37) in tRNA + AMP + H(+). Functionally, required for the formation of a threonylcarbamoyl group on adenosine at position 37 (t(6)A37) in tRNAs that read codons beginning with adenine. Is involved in the transfer of the threonylcarbamoyl moiety of threonylcarbamoyl-AMP (TC-AMP) to the N6 group of A37, together with TsaE and TsaB. TsaD likely plays a direct catalytic role in this reaction. The polypeptide is tRNA N6-adenosine threonylcarbamoyltransferase (Mesoplasma florum (strain ATCC 33453 / NBRC 100688 / NCTC 11704 / L1) (Acholeplasma florum)).